The primary structure comprises 264 residues: 5'-nucleotidase SurE (264 aa).

Residues aspartate 9, aspartate 10, serine 40, and asparagine 95 each contribute to the a divalent metal cation site.

This sequence belongs to the SurE nucleotidase family. A divalent metal cation serves as cofactor.

It is found in the cytoplasm. The enzyme catalyses a ribonucleoside 5'-phosphate + H2O = a ribonucleoside + phosphate. Its function is as follows. Nucleotidase that shows phosphatase activity on nucleoside 5'-monophosphates. The polypeptide is 5'-nucleotidase SurE (Helicobacter hepaticus (strain ATCC 51449 / 3B1)).